The sequence spans 471 residues: MTQFLPPNLLALFAPRDPVPYLPPLDKLPHEKHHNQPYCGIAPYIREFEDPRDAPPPTRAETREERMERKRREKIERRQQDVENELKIWDPHNDQNAQGDAFKTLFVARVNYDTTESKLRREFEVYGPIKRIHIVYNKGSEGSGKPRGYAFIEYEHERDMHSAYKHADGKKIDGRRVLVDVERGRTVKGWRPRRLGGGLGGTRRGGADVNIRHSGRDDTSRYDERDRERERDRRERSREREKEPRERRRSRSRERRRKSRSREKEERKRTREKSKDKDKEKDKDNKDRDRKRRSRSRERKRERDRDREKKEERVEAEVPEADDAPQDDAQIGDLGIDGIELKQEPEEKSRERDRERDRDREKGEKDRDKDRDRDRDRRRSHRDRDREKDRDRDRDRRRDRDRDRERDKDHKRERDRGDRSEKREERVPDNGMVMEQAEETSQDMYLDQESMQSGDGYLSTENGYMMEPPME.

Residues 48-78 (FEDPRDAPPPTRAETREERMERKRREKIERR) form a disordered region. Basic and acidic residues predominate over residues 60–78 (AETREERMERKRREKIERR). Positions 92–205 (HNDQNAQGDA…GGGLGGTRRG (114 aa)) are required for interaction with U1 RNA. One can recognise an RRM domain in the interval 103-184 (KTLFVARVNY…RRVLVDVERG (82 aa)). The tract at residues 190–471 (WRPRRLGGGL…NGYMMEPPME (282 aa)) is disordered. The segment covering 195–204 (LGGGLGGTRR) has biased composition (gly residues). Residues 210–246 (NIRHSGRDDTSRYDERDRERERDRRERSREREKEPRE) are compositionally biased toward basic and acidic residues. Positions 247–261 (RRRSRSRERRRKSRS) are enriched in basic residues. Over residues 262–288 (REKEERKRTREKSKDKDKEKDKDNKDR) the composition is skewed to basic and acidic residues. Basic residues predominate over residues 289–298 (DRKRRSRSRE). The span at 299–316 (RKRERDRDREKKEERVEA) shows a compositional bias: basic and acidic residues. The span at 317–326 (EVPEADDAPQ) shows a compositional bias: acidic residues. Over residues 339-428 (IELKQEPEEK…RSEKREERVP (90 aa)) the composition is skewed to basic and acidic residues.

Component of the U1 snRNP. The U1 snRNP is composed of the U1 snRNA and the 7 core Sm proteins snrpb, snrpd1, snrpd2, snrpd3, snrpe, snrpf and snrpg that assemble in a heptameric protein ring on the Sm site of the small nuclear RNA to form the core snRNP, and at least three U1 snRNP-specific proteins snrnp70/U1-70K, snrpa/U1-A and snrpc/U1-C.

It localises to the nucleus speckle. The protein localises to the nucleus. Its subcellular location is the nucleoplasm. Functionally, component of the spliceosomal U1 snRNP, which is essential for recognition of the pre-mRNA 5' splice-site and the subsequent assembly of the spliceosome. snrnp70 binds to the loop I region of U1-snRNA. The sequence is that of U1 small nuclear ribonucleoprotein 70 kDa (snrnp70) from Xenopus laevis (African clawed frog).